The following is a 547-amino-acid chain: Probable protein kinase UbiB (547 aa).

The Protein kinase domain occupies 121 to 501 (EFSPDPMASA…QLRSERRWRR (381 aa)). ATP is bound by residues 127–135 (MASASVAQV) and Lys149. The active-site Proton acceptor is Asp284. The next 2 helical transmembrane spans lie at 502–522 (GFIA…HAGQ) and 523–543 (WLAD…GVML).

It belongs to the ABC1 family. UbiB subfamily.

It localises to the cell inner membrane. It functions in the pathway cofactor biosynthesis; ubiquinone biosynthesis [regulation]. Is probably a protein kinase regulator of UbiI activity which is involved in aerobic coenzyme Q (ubiquinone) biosynthesis. The chain is Probable protein kinase UbiB from Marinobacter nauticus (strain ATCC 700491 / DSM 11845 / VT8) (Marinobacter aquaeolei).